A 397-amino-acid chain; its full sequence is Argininosuccinate synthase (397 aa).

An ATP-binding site is contributed by 8–16 (AYSGGLDTS). 2 residues coordinate L-citrulline: Y86 and S91. G116 serves as a coordination point for ATP. Positions 118, 122, and 123 each coordinate L-aspartate. N122 is an L-citrulline binding site. L-citrulline-binding residues include R126, S175, S184, E260, and Y272.

This sequence belongs to the argininosuccinate synthase family. Type 1 subfamily. As to quaternary structure, homotetramer.

The protein resides in the cytoplasm. The enzyme catalyses L-citrulline + L-aspartate + ATP = 2-(N(omega)-L-arginino)succinate + AMP + diphosphate + H(+). It functions in the pathway amino-acid biosynthesis; L-arginine biosynthesis; L-arginine from L-ornithine and carbamoyl phosphate: step 2/3. This chain is Argininosuccinate synthase, found in Clostridium botulinum (strain Okra / Type B1).